A 176-amino-acid polypeptide reads, in one-letter code: MALLPILSFPDPRLRTIAKPVEEVTDEIRQLAADMFETMYAAPGIGLAASQVDRHIQLIVMDLSESKDEPMVFINPKVTPLTEETQPYEEGCLSVPQIYDKVDRPSRVKIEAINLEGQAFEIEADGLLAVCIQHEMDHLNGKLFVDYLSPLKRQRVREKVEKIVRQREREKVAVKR.

Residues C92 and H134 each contribute to the Fe cation site. Residue E135 is part of the active site. Position 138 (H138) interacts with Fe cation.

Belongs to the polypeptide deformylase family. Fe(2+) serves as cofactor.

The enzyme catalyses N-terminal N-formyl-L-methionyl-[peptide] + H2O = N-terminal L-methionyl-[peptide] + formate. Removes the formyl group from the N-terminal Met of newly synthesized proteins. Requires at least a dipeptide for an efficient rate of reaction. N-terminal L-methionine is a prerequisite for activity but the enzyme has broad specificity at other positions. This Acinetobacter baumannii (strain SDF) protein is Peptide deformylase.